The sequence spans 586 residues: Ezrin (586 aa).

The region spanning 2–296 is the FERM domain; that stretch reads PKPINVRVTT…NHELYMRRRK (295 aa). At K60 the chain carries N6-acetyllysine. A [IL]-x-C-x-x-[DE] motif motif is present at residues 115 to 120; it reads IYCPPE. A Phosphotyrosine; by PDGFR modification is found at Y146. Residues 244-586 form an interaction with SCYL3 region; the sequence is EIRNISFNDK…KQRIDEFEAL (343 aa). The stretch at 302–462 forms a coiled coil; sequence VQQMKAQARE…QDDLVKTKEE (161 aa). The interval 306 to 341 is disordered; sequence KAQAREEKHQKQLERQQLETEKKRRETVEREKEQMM. Positions 308-341 are enriched in basic and acidic residues; sequence QAREEKHQKQLERQQLETEKKRRETVEREKEQMM. Y354 carries the post-translational modification Phosphotyrosine; by PDGFR. At S366 the chain carries Phosphoserine. Y478 carries the phosphotyrosine modification. The tract at residues 485–564 is disordered; sequence VQESLQDEGA…NENMRQGRDK (80 aa). The span at 507-528 shows a compositional bias: basic and acidic residues; that stretch reads GIRDDRNEEKRITEAEKNERVQ. Over residues 530–539 the composition is skewed to polar residues; the sequence is QLLTLSSELS. S535 is modified (phosphoserine). Residues 540-564 show a composition bias toward basic and acidic residues; it reads QARDENKRTHNDIIHNENMRQGRDK. Position 567 is a phosphothreonine; by ROCK2 and PKC/PRKCI (T567).

As to quaternary structure, monomer. Homodimer. Interacts with PALS1 and NHERF2. Found in a complex with EZR, PODXL and NHERF2. Interacts with MCC, PLEKHG6, PODXL, SCYL3/PACE1, NHERF1 and TMEM8B. Interacts (when phosphorylated) with FES/FPS. Interacts with dimeric S100P, the interaction may be activating through unmasking of F-actin binding sites. Identified in complexes that contain VIM, EZR, AHNAK, BFSP1, BFSP2, ANK2, PLEC, PRX and spectrin. Detected in a complex composed of at least EZR, AHNAK, PPL and PRX. Interacts with PDPN (via cytoplasmic domain); activates RHOA and promotes epithelial-mesenchymal transition. Interacts with SPN/CD43 cytoplasmic tail, CD44 and ICAM2. Interacts with SLC9A3; interaction targets SLC9A3 to the apical membrane. Interacts with SLC9A1; regulates interactions of SLC9A1 with cytoskeletal and promotes stress fiber formation. Interacts with CLIC5; may work together in a complex which also includes RDX and MYO6 to stabilize linkages between the plasma membrane and subjacent actin cytoskeleton at the base of stereocilia. In terms of processing, phosphorylated by tyrosine-protein kinases. Phosphorylation by ROCK2 suppresses the head-to-tail association of the N-terminal and C-terminal halves resulting in an opened conformation which is capable of actin and membrane-binding. S-nitrosylation is induced by interferon-gamma and oxidatively-modified low-densitity lipoprotein (LDL(ox)) possibly implicating the iNOS-S100A8/9 transnitrosylase complex. Expressed in cerebral cortex, basal ganglia, hippocampus, hypophysis, and optic nerve. Weakly expressed in brain stem and diencephalon. Stronger expression was detected in gray matter of frontal lobe compared to white matter (at protein level). Component of the microvilli of intestinal epithelial cells. Preferentially expressed in astrocytes of hippocampus, frontal cortex, thalamus, parahippocampal cortex, amygdala, insula, and corpus callosum. Not detected in neurons in most tissues studied.

Its subcellular location is the apical cell membrane. It localises to the cell projection. The protein resides in the microvillus membrane. The protein localises to the ruffle membrane. It is found in the cytoplasm. Its subcellular location is the cell cortex. It localises to the cytoskeleton. The protein resides in the microvillus. A head-to-tail association, of the N-terminal and C-terminal halves results in a closed conformation (inactive form) which is incapable of actin or membrane-binding. In terms of biological role, probably involved in connections of major cytoskeletal structures to the plasma membrane. In epithelial cells, required for the formation of microvilli and membrane ruffles on the apical pole. Along with PLEKHG6, required for normal macropinocytosis. This is Ezrin (EZR) from Homo sapiens (Human).